The following is a 373-amino-acid chain: RNA cytidine acetyltransferase (373 aa).

Arg53 provides a ligand contact to ATP. Acetyl-CoA is bound by residues 216–218 (IAT) and 223–229 (TGMGYGS). A disordered region spans residues 246–271 (GEFEEENEAAKPADEESDDESNLLKE). Arg313 provides a ligand contact to acetyl-CoA.

This sequence belongs to the RNA cytidine acetyltransferase family. NAT10 subfamily.

The protein localises to the nucleus. The protein resides in the nucleolus. It carries out the reaction a cytidine in 18S rRNA + acetyl-CoA + ATP + H2O = an N(4)-acetylcytidine in 18S rRNA + ADP + phosphate + CoA + H(+). It catalyses the reaction a cytidine in tRNA + acetyl-CoA + ATP + H2O = an N(4)-acetylcytidine in tRNA + ADP + phosphate + CoA + H(+). In terms of biological role, RNA cytidine acetyltransferase with specificity toward both 18S rRNA and tRNAs. Catalyzes the formation of N(4)-acetylcytidine (ac4C) in 18S rRNA. Required for early nucleolar cleavages of precursor rRNA at sites A0, A1 and A2 during 18S rRNA synthesis. Catalyzes the formation of ac4C in serine and leucine tRNAs. Requires a tRNA-binding adapter protein for full tRNA acetyltransferase activity but not for 18S rRNA acetylation. The polypeptide is RNA cytidine acetyltransferase (Achlya ambisexualis (Water mold)).